The following is a 971-amino-acid chain: DNA-directed RNA polymerase subunit Rpo1N (971 aa).

At Met-1 the chain carries Blocked amino end (Met). Residues Cys-62, Cys-65, Cys-72, His-75, Cys-102, Cys-105, Cys-149, and Cys-152 each coordinate Zn(2+). A disordered region spans residues 185–204; that stretch reads SMQPDEDEDDAGVSPQELAE. Residues Asp-527, Asp-529, and Asp-531 each coordinate Mg(2+). Positions 951–971 are disordered; it reads VEEPPTNLSEHGAAWEVESDD.

Belongs to the RNA polymerase beta' chain family. In terms of assembly, part of the RNA polymerase complex. Requires Mg(2+) as cofactor. The cofactor is Zn(2+). In terms of processing, the N-terminus is blocked.

The protein localises to the cytoplasm. The enzyme catalyses RNA(n) + a ribonucleoside 5'-triphosphate = RNA(n+1) + diphosphate. In terms of biological role, DNA-dependent RNA polymerase (RNAP) catalyzes the transcription of DNA into RNA using the four ribonucleoside triphosphates as substrates. Forms the clamp head domain. The sequence is that of DNA-directed RNA polymerase subunit Rpo1N from Halobacterium salinarum (strain ATCC 29341 / DSM 671 / R1).